A 229-amino-acid polypeptide reads, in one-letter code: MIQVIVTDIEGTTTDIRFVHQVLFPYARERLTPFLRAHQQDDDIAALLVDLRREIAQPDADIETLITVLHGFMDEDRKSTVLKAIQGIIWRTGYLQADFRGHVYPEVAQQLADWHQQGLKLYVYSSGSVAAQKLLFGYSDAGDLCPLFSGYFDTHVGAKRDVSAYQKIANQLGIAPQALLFLSDIRQELDAAQLAGWHTCQLIRDLPDNDSAHPQVNRFDQIVLSLFTE.

This sequence belongs to the HAD-like hydrolase superfamily. MasA/MtnC family. In terms of assembly, monomer. The cofactor is Mg(2+).

It carries out the reaction 5-methylsulfanyl-2,3-dioxopentyl phosphate + H2O = 1,2-dihydroxy-5-(methylsulfanyl)pent-1-en-3-one + phosphate. The protein operates within amino-acid biosynthesis; L-methionine biosynthesis via salvage pathway; L-methionine from S-methyl-5-thio-alpha-D-ribose 1-phosphate: step 3/6. Its pathway is amino-acid biosynthesis; L-methionine biosynthesis via salvage pathway; L-methionine from S-methyl-5-thio-alpha-D-ribose 1-phosphate: step 4/6. Bifunctional enzyme that catalyzes the enolization of 2,3-diketo-5-methylthiopentyl-1-phosphate (DK-MTP-1-P) into the intermediate 2-hydroxy-3-keto-5-methylthiopentenyl-1-phosphate (HK-MTPenyl-1-P), which is then dephosphorylated to form the acireductone 1,2-dihydroxy-3-keto-5-methylthiopentene (DHK-MTPene). This is Enolase-phosphatase E1 from Yersinia pseudotuberculosis serotype O:1b (strain IP 31758).